Reading from the N-terminus, the 206-residue chain is Glycerol-3-phosphate acyltransferase 1 (206 aa).

5 consecutive transmembrane segments (helical) span residues 7–27 (LVIGYFLGNILFAMIVTKIFL), 54–74 (ILTCIGDLAKTLAALLIVYFI), 81–101 (DLSFAGLGVVLGHSFPFWNHF), 114–134 (IVFFDWRAGLIALLIGLFLVI), and 155–175 (WINFGWEQGLIFLIATLIMIF).

Belongs to the PlsY family. In terms of assembly, probably interacts with PlsX.

The protein resides in the cell membrane. It catalyses the reaction an acyl phosphate + sn-glycerol 3-phosphate = a 1-acyl-sn-glycero-3-phosphate + phosphate. Its pathway is lipid metabolism; phospholipid metabolism. Functionally, catalyzes the transfer of an acyl group from acyl-phosphate (acyl-PO(4)) to glycerol-3-phosphate (G3P) to form lysophosphatidic acid (LPA). This enzyme utilizes acyl-phosphate as fatty acyl donor, but not acyl-CoA or acyl-ACP. This chain is Glycerol-3-phosphate acyltransferase 1, found in Lactobacillus johnsonii (strain CNCM I-12250 / La1 / NCC 533).